A 250-amino-acid chain; its full sequence is Endonuclease NucS 2 (250 aa).

Belongs to the NucS endonuclease family.

Its subcellular location is the cytoplasm. Functionally, cleaves both 3' and 5' ssDNA extremities of branched DNA structures. The protein is Endonuclease NucS 2 of Halobacterium salinarum (strain ATCC 700922 / JCM 11081 / NRC-1) (Halobacterium halobium).